Consider the following 84-residue polypeptide: Small ribosomal subunit protein bS20 (84 aa).

The span at 62–72 shows a compositional bias: basic residues; it reads KNKARRLKSRA. Residues 62 to 84 are disordered; sequence KNKARRLKSRAARWSNSATAASR. Over residues 75–84 the composition is skewed to polar residues; sequence WSNSATAASR.

The protein belongs to the bacterial ribosomal protein bS20 family.

Functionally, binds directly to 16S ribosomal RNA. The sequence is that of Small ribosomal subunit protein bS20 from Mycoplasmoides gallisepticum (strain R(low / passage 15 / clone 2)) (Mycoplasma gallisepticum).